A 71-amino-acid polypeptide reads, in one-letter code: Conotoxin Vc6.12 (71 aa).

The signal sequence occupies residues 1 to 19 (MQKLIILLLVAAVLMSTQA). Residues 20–43 (LFQEKRPMKKINFLSKGKTDAEKQ) constitute a propeptide that is removed on maturation. Disulfide bonds link cysteine 48-cysteine 62, cysteine 55-cysteine 66, and cysteine 61-cysteine 70.

The protein belongs to the conotoxin O2 superfamily. Expressed by the venom duct.

Its subcellular location is the secreted. Its function is as follows. Inhibits voltage-gated ion channels. The chain is Conotoxin Vc6.12 from Conus victoriae (Queen Victoria cone).